Reading from the N-terminus, the 378-residue chain is Forkhead box protein I1 (378 aa).

2 disordered regions span residues methionine 1–proline 26 and aspartate 208–leucine 278. A DNA-binding region (fork-head) is located at residues arginine 123–lysine 217. Residues serine 236–proline 248 are compositionally biased toward polar residues.

In terms of tissue distribution, expressed in kidney.

The protein resides in the nucleus. Transcriptional activator required for the development of normal hearing, sense of balance and kidney function. Required for the expression of SLC26A4/PDS, JAG1 and COCH in a subset of epithelial cells and the development of the endolymphatic system in the inner ear. Also required for the expression of SLC4A1/AE1, SLC4A9/AE4, ATP6V1B1 and the differentiation of intercalated cells in the epithelium of distal renal tubules. This Homo sapiens (Human) protein is Forkhead box protein I1 (FOXI1).